The sequence spans 193 residues: Phosphoheptose isomerase (193 aa).

In terms of domain architecture, SIS spans 37–193; sequence IAQSFKNEKK…LIIEKEMQKN (157 aa). 52–54 is a substrate binding site; that stretch reads NGG. Positions 61 and 65 each coordinate Zn(2+). Residues E65, 93 to 94, 119 to 121, S124, and Q172 each bind substrate; these read ND and STS. Zn(2+) is bound by residues Q172 and H180.

Belongs to the SIS family. GmhA subfamily. Homotetramer. Zn(2+) serves as cofactor.

Its subcellular location is the cytoplasm. It catalyses the reaction 2 D-sedoheptulose 7-phosphate = D-glycero-alpha-D-manno-heptose 7-phosphate + D-glycero-beta-D-manno-heptose 7-phosphate. The protein operates within carbohydrate biosynthesis; D-glycero-D-manno-heptose 7-phosphate biosynthesis; D-glycero-alpha-D-manno-heptose 7-phosphate and D-glycero-beta-D-manno-heptose 7-phosphate from sedoheptulose 7-phosphate: step 1/1. Its function is as follows. Catalyzes the isomerization of sedoheptulose 7-phosphate in D-glycero-D-manno-heptose 7-phosphate. This is Phosphoheptose isomerase from Buchnera aphidicola subsp. Acyrthosiphon pisum (strain 5A).